Consider the following 341-residue polypeptide: S-adenosylmethionine:tRNA ribosyltransferase-isomerase (341 aa).

This sequence belongs to the QueA family. Monomer.

It is found in the cytoplasm. It catalyses the reaction 7-aminomethyl-7-carbaguanosine(34) in tRNA + S-adenosyl-L-methionine = epoxyqueuosine(34) in tRNA + adenine + L-methionine + 2 H(+). Its pathway is tRNA modification; tRNA-queuosine biosynthesis. Functionally, transfers and isomerizes the ribose moiety from AdoMet to the 7-aminomethyl group of 7-deazaguanine (preQ1-tRNA) to give epoxyqueuosine (oQ-tRNA). This chain is S-adenosylmethionine:tRNA ribosyltransferase-isomerase, found in Staphylococcus epidermidis (strain ATCC 35984 / DSM 28319 / BCRC 17069 / CCUG 31568 / BM 3577 / RP62A).